Reading from the N-terminus, the 275-residue chain is Tryptophan synthase alpha chain (275 aa).

Glu51 serves as the catalytic Proton acceptor.

The protein belongs to the TrpA family. In terms of assembly, tetramer of two alpha and two beta chains.

It catalyses the reaction (1S,2R)-1-C-(indol-3-yl)glycerol 3-phosphate + L-serine = D-glyceraldehyde 3-phosphate + L-tryptophan + H2O. The protein operates within amino-acid biosynthesis; L-tryptophan biosynthesis; L-tryptophan from chorismate: step 5/5. The alpha subunit is responsible for the aldol cleavage of indoleglycerol phosphate to indole and glyceraldehyde 3-phosphate. The protein is Tryptophan synthase alpha chain of Caulobacter vibrioides (strain ATCC 19089 / CIP 103742 / CB 15) (Caulobacter crescentus).